The chain runs to 152 residues: Anaerobic nitrite reductase HBI (152 aa).

The Globin domain occupies 2-151 (ALTEKQEALL…LVATIKAEMK (150 aa)). Positions 35-39 (EAAPE) match the Homodimerization motif. Positions 45, 59, 63, 93, and 98 each coordinate heme b. The Homodimerization motif lies at 105 to 117 (DPHFEVMKGALLG).

Belongs to the plant globin family. As to quaternary structure, homodimer. Heme b serves as cofactor. Root nodules.

Its subcellular location is the cytoplasm. It is found in the nucleus. The enzyme catalyses Fe(III)-heme b-[protein] + nitric oxide + H2O = Fe(II)-heme b-[protein] + nitrite + 2 H(+). Phytoglobin that reduces nitrite to nitric oxide (NO) under anoxic conditions (e.g. during flooding or in waterlogged soil) and upon root nodulation. Required for general plant development and during nodulation, especially for the onset of symbiosis. Monitors nitric oxide (NO) levels during early phase of the nitrogen-fixing symbiosis and buffers oxygen in functioning nodules. May not function as an oxygen storage or transport protein. Has an unusually high affinity for O(2) through a hexacoordinate heme iron because of a very low dissociation constant. The polypeptide is Anaerobic nitrite reductase HBI (Casuarina glauca (Swamp oak)).